The chain runs to 136 residues: Histone H2B.5 (136 aa).

Residues 1 to 36 (MAPKAEKKPAAEKKPVETEKKPKAEKRVPGKDGGAD) are compositionally biased toward basic and acidic residues. The disordered stretch occupies residues 1-44 (MAPKAEKKPAAEKKPVETEKKPKAEKRVPGKDGGADKKKKKAKK). K7 and K26 each carry N6-acetyllysine. Residue K132 forms a Glycyl lysine isopeptide (Lys-Gly) (interchain with G-Cter in ubiquitin) linkage.

The protein belongs to the histone H2B family. As to quaternary structure, the nucleosome is a histone octamer containing two molecules each of H2A, H2B, H3 and H4 assembled in one H3-H4 heterotetramer and two H2A-H2B heterodimers. The octamer wraps approximately 147 bp of DNA. In terms of processing, can be acetylated to form H2BK6ac and H2BK33ac. Monoubiquitinated to form H2BK143ub1; may give a specific tag for epigenetic transcriptional activation.

It is found in the nucleus. Its subcellular location is the chromosome. Its function is as follows. Core component of nucleosome. Nucleosomes wrap and compact DNA into chromatin, limiting DNA accessibility to the cellular machineries which require DNA as a template. Histones thereby play a central role in transcription regulation, DNA repair, DNA replication and chromosomal stability. DNA accessibility is regulated via a complex set of post-translational modifications of histones, also called histone code, and nucleosome remodeling. The polypeptide is Histone H2B.5 (Triticum aestivum (Wheat)).